Here is a 51-residue protein sequence, read N- to C-terminus: Large ribosomal subunit protein eL39z (51 aa).

This sequence belongs to the eukaryotic ribosomal protein eL39 family.

In Oryza sativa subsp. japonica (Rice), this protein is Large ribosomal subunit protein eL39z (RPL39A).